The following is a 194-amino-acid chain: Nucleoside triphosphate pyrophosphatase (194 aa).

Residue aspartate 68 is the Proton acceptor of the active site.

Belongs to the Maf family. The cofactor is a divalent metal cation.

It is found in the cytoplasm. The enzyme catalyses a ribonucleoside 5'-triphosphate + H2O = a ribonucleoside 5'-phosphate + diphosphate + H(+). It catalyses the reaction a 2'-deoxyribonucleoside 5'-triphosphate + H2O = a 2'-deoxyribonucleoside 5'-phosphate + diphosphate + H(+). Nucleoside triphosphate pyrophosphatase. May have a dual role in cell division arrest and in preventing the incorporation of modified nucleotides into cellular nucleic acids. The polypeptide is Nucleoside triphosphate pyrophosphatase (Corynebacterium jeikeium (strain K411)).